We begin with the raw amino-acid sequence, 136 residues long: General odorant-binding protein 57e (136 aa).

The first 20 residues, Met-1 to Ala-20, serve as a signal peptide directing secretion. Cystine bridges form between Cys-28–Cys-61, Cys-57–Cys-109, and Cys-98–Cys-118.

It belongs to the PBP/GOBP family.

Its function is as follows. Present in the aqueous fluid surrounding olfactory sensory dendrites and are thought to aid in the capture and transport of hydrophobic odorants into and through this fluid. The polypeptide is General odorant-binding protein 57e (Drosophila melanogaster (Fruit fly)).